The following is a 474-amino-acid chain: Ribulose bisphosphate carboxylase large chain (474 aa).

Substrate contacts are provided by Asn117 and Thr167. The Proton acceptor role is filled by Lys169. Residue Lys171 participates in substrate binding. 3 residues coordinate Mg(2+): Lys195, Asp197, and Glu198. Lys195 is subject to N6-carboxylysine. His288 functions as the Proton acceptor in the catalytic mechanism. Arg289, His321, and Ser373 together coordinate substrate.

It belongs to the RuBisCO large chain family. Type I subfamily. Heterohexadecamer of 8 large chains and 8 small chains. It depends on Mg(2+) as a cofactor.

It carries out the reaction 2 (2R)-3-phosphoglycerate + 2 H(+) = D-ribulose 1,5-bisphosphate + CO2 + H2O. It catalyses the reaction D-ribulose 1,5-bisphosphate + O2 = 2-phosphoglycolate + (2R)-3-phosphoglycerate + 2 H(+). Its function is as follows. RuBisCO catalyzes two reactions: the carboxylation of D-ribulose 1,5-bisphosphate, the primary event in carbon dioxide fixation, as well as the oxidative fragmentation of the pentose substrate. Both reactions occur simultaneously and in competition at the same active site. The protein is Ribulose bisphosphate carboxylase large chain of Hydrogenophilus thermoluteolus (Pseudomonas hydrogenothermophila).